Consider the following 460-residue polypeptide: Probable lipid II flippase MurJ (460 aa).

The next 11 membrane-spanning stretches (helical) occupy residues 4–24 (ILGA…PNLF), 50–70 (FASL…LLVA), 95–115 (IVAI…LGAL), 122–142 (FFAS…ALLI), 155–175 (LSYG…YPLV), 228–248 (IASF…VSYL), 257–277 (LPLA…IAIA), 292–312 (KAWF…IMLS), 336–356 (VFSL…FSLW), 366–386 (AAKI…SLMP), and 428–448 (LVIL…KSWV).

It belongs to the MurJ/MviN family.

It localises to the cell inner membrane. It functions in the pathway cell wall biogenesis; peptidoglycan biosynthesis. Its function is as follows. Involved in peptidoglycan biosynthesis. Transports lipid-linked peptidoglycan precursors from the inner to the outer leaflet of the cytoplasmic membrane. In Helicobacter pylori (strain J99 / ATCC 700824) (Campylobacter pylori J99), this protein is Probable lipid II flippase MurJ.